Reading from the N-terminus, the 38-residue chain is Cytochrome b6-f complex subunit 5 (38 aa).

The chain crosses the membrane as a helical span at residues L5–A25.

It belongs to the PetG family. As to quaternary structure, the 4 large subunits of the cytochrome b6-f complex are cytochrome b6, subunit IV (17 kDa polypeptide, PetD), cytochrome f and the Rieske protein, while the 4 small subunits are PetG, PetL, PetM and PetN. The complex functions as a dimer.

It is found in the cellular thylakoid membrane. Functionally, component of the cytochrome b6-f complex, which mediates electron transfer between photosystem II (PSII) and photosystem I (PSI), cyclic electron flow around PSI, and state transitions. PetG is required for either the stability or assembly of the cytochrome b6-f complex. The sequence is that of Cytochrome b6-f complex subunit 5 from Rippkaea orientalis (strain PCC 8801 / RF-1) (Cyanothece sp. (strain PCC 8801)).